Consider the following 257-residue polypeptide: MSQIEFKNVSKVYPNGHVGLKNINLNIEKGEFAVIVGLSGAGKSTLLRSVNRLHDITSGEIFIQGKSITKAHGKALLEMRRNIGMIFQHFNLVKRSSVLRNVLSGRVGYHPTWKMVLGLFPKEDKIKAMDALERVNILDKYNQRSDELSGGQQQRISIARALCQESEIILADEPVASLDPLTTKQVMDDLRKINQELGITILINLHFVDLAKEYGTRIIGLRDGEVVYDGPASEATDDVFSEIYGRTIKEDEKLGVN.

An ABC transporter domain is found at 4-248; that stretch reads IEFKNVSKVY…VFSEIYGRTI (245 aa). Residue 37-44 coordinates ATP; sequence GLSGAGKS.

Belongs to the ABC transporter superfamily. Phosphonates importer (TC 3.A.1.9.1) family. In terms of assembly, the complex is composed of two ATP-binding proteins (PhnC), two transmembrane proteins (PhnE) and a solute-binding protein (PhnD).

It localises to the cell membrane. It carries out the reaction phosphonate(out) + ATP + H2O = phosphonate(in) + ADP + phosphate + H(+). In terms of biological role, part of the ABC transporter complex PhnCDE involved in phosphonates import. Responsible for energy coupling to the transport system. This Staphylococcus aureus (strain COL) protein is Phosphonates import ATP-binding protein PhnC.